The chain runs to 447 residues: Probable ribosomal RNA small subunit methyltransferase B (447 aa).

S-adenosyl-L-methionine is bound by residues 259–265 (CAAPGGK), Asp283, Asp310, and Asp329. The Nucleophile role is filled by Cys382.

This sequence belongs to the class I-like SAM-binding methyltransferase superfamily. RsmB/NOP family.

The protein localises to the cytoplasm. It catalyses the reaction cytidine(967) in 16S rRNA + S-adenosyl-L-methionine = 5-methylcytidine(967) in 16S rRNA + S-adenosyl-L-homocysteine + H(+). In terms of biological role, specifically methylates the cytosine at position 967 (m5C967) of 16S rRNA. This chain is Probable ribosomal RNA small subunit methyltransferase B, found in Bacillus subtilis (strain 168).